The sequence spans 228 residues: CD9 antigen (228 aa).

Residues 1–12 (MPVKGGTKCIKY) are Cytoplasmic-facing. C9 is lipidated: S-palmitoyl cysteine. A helical membrane pass occupies residues 13 to 33 (LLFGFNFIFWLAGIAVLAIGL). The Extracellular portion of the chain corresponds to 34-55 (WLRFDSQTKSIFEQETNNNNSS). Residues N52 and N53 are each glycosylated (N-linked (GlcNAc...) asparagine). The helical transmembrane segment at 56 to 76 (FYTGVYILIGAGALMMLVGFL) threads the bilayer. The Cytoplasmic segment spans residues 77–87 (GCCGAVQESQC). 3 S-palmitoyl cysteine lipidation sites follow: C78, C79, and C87. A helical transmembrane segment spans residues 88-111 (MLGLFFGFLLVIFAIEIAAAIWGY). The Extracellular segment spans residues 112–195 (SHKDEVIKEV…KEVFDNKFHI (84 aa)). Intrachain disulfides connect C152–C181 and C153–C167. Residues 196 to 221 (IGAVGIGIAVVMIFGMIFSMILCCAI) traverse the membrane as a helical segment. Residues C218 and C219 are each lipidated (S-palmitoyl cysteine). The Cytoplasmic portion of the chain corresponds to 222–228 (RRNREMV).

This sequence belongs to the tetraspanin (TM4SF) family. Forms both disulfide-linked homodimers and higher homooligomers as well as heterooligomers with other members of the tetraspanin family. Interacts (via the second extracellular domain) with integrin ITGAV:ITGB3. Interacts with integrin ITGA6:ITGB1; interaction takes place in oocytes and is involved in sperm-egg fusion. Part of integrin-tetraspanin complexes composed of CD81, beta-1 and beta-2 integrins in the membrane of monocyte/macrophages. Interacts with CD63; identified in a complex with CD63 and ITGB3. Associates with CR2/CD21 and with PTGFRN/CD9P1. Part of a complex composed of CD9, CD81, PTGFRN and IGSF8. Interacts directly with IGSF8. Interacts with PDPN; this interaction is homophilic and attenuates platelet aggregation and pulmonary metastasis induced by PDPN. Interacts (on T cell side) with CD81 at immunological synapses between antigen-presenting cells and T cells. Palmitoylated at a low, basal level in unstimulated platelets. The level of palmitoylation increases when platelets are activated by thrombin (in vitro). The protein exists in three forms with molecular masses between 22 and 27 kDa, and is known to carry covalently linked fatty acids. Palmitoylation by ZDHHC2 regulates CD9 expression, association with other tetraspanin family proteins and function in cell adhesion.

It is found in the cell membrane. It localises to the membrane. The protein resides in the secreted. The protein localises to the extracellular exosome. Its function is as follows. Integral membrane protein associated with integrins, which regulates different processes, such as sperm-egg fusion, platelet activation and aggregation, and cell adhesion. Present at the cell surface of oocytes and plays a key role in sperm-egg fusion, possibly by organizing multiprotein complexes and the morphology of the membrane required for the fusion. In myoblasts, associates with CD81 and PTGFRN and inhibits myotube fusion during muscle regeneration. In macrophages, associates with CD81 and beta-1 and beta-2 integrins, and prevents macrophage fusion into multinucleated giant cells specialized in ingesting complement-opsonized large particles. Also prevents the fusion between mononuclear cell progenitors into osteoclasts in charge of bone resorption. Acts as a receptor for PSG17. Involved in platelet activation and aggregation. Regulates paranodal junction formation. Involved in cell adhesion, cell motility and tumor metastasis. This chain is CD9 antigen, found in Chlorocebus aethiops (Green monkey).